Here is a 50-residue protein sequence, read N- to C-terminus: MRVQVILECTETKLRHYTTTKNKKTHPERLEMMKYNPVLKKHTLYKETKK.

This sequence belongs to the bacterial ribosomal protein bL33 family.

The chain is Large ribosomal subunit protein bL33 from Fusobacterium nucleatum subsp. nucleatum (strain ATCC 25586 / DSM 15643 / BCRC 10681 / CIP 101130 / JCM 8532 / KCTC 2640 / LMG 13131 / VPI 4355).